The following is a 624-amino-acid chain: DNA mismatch repair protein MutL (624 aa).

The segment covering 340 to 355 has biased composition (basic and acidic residues); that stretch reads NKLDTDSHSQSHERGH. A disordered region spans residues 340 to 415; it reads NKLDTDSHSQ…RGGATSSYRQ (76 aa). Polar residues-rich tracts occupy residues 372–383 and 391–415; these read HQTAPSTKASTE and SPISAVPSHTSDVQSRGGATSSYRQ.

It belongs to the DNA mismatch repair MutL/HexB family.

In terms of biological role, this protein is involved in the repair of mismatches in DNA. It is required for dam-dependent methyl-directed DNA mismatch repair. May act as a 'molecular matchmaker', a protein that promotes the formation of a stable complex between two or more DNA-binding proteins in an ATP-dependent manner without itself being part of a final effector complex. This Shewanella sediminis (strain HAW-EB3) protein is DNA mismatch repair protein MutL.